The sequence spans 103 residues: Nucleoid-associated protein Cgl0243/cg0297 (103 aa).

It belongs to the YbaB/EbfC family. In terms of assembly, homodimer.

The protein resides in the cytoplasm. The protein localises to the nucleoid. Functionally, binds to DNA and alters its conformation. May be involved in regulation of gene expression, nucleoid organization and DNA protection. The polypeptide is Nucleoid-associated protein Cgl0243/cg0297 (Corynebacterium glutamicum (strain ATCC 13032 / DSM 20300 / JCM 1318 / BCRC 11384 / CCUG 27702 / LMG 3730 / NBRC 12168 / NCIMB 10025 / NRRL B-2784 / 534)).